We begin with the raw amino-acid sequence, 403 residues long: Argininosuccinate synthase (403 aa).

ATP contacts are provided by residues 12–20 (AYSGGLDTS) and A39. L-citrulline contacts are provided by Y90 and S95. Residue G120 coordinates ATP. The L-aspartate site is built by T122, N126, and D127. Residue N126 participates in L-citrulline binding. L-citrulline contacts are provided by R130, S182, S191, E267, and Y279.

This sequence belongs to the argininosuccinate synthase family. Type 1 subfamily. Homotetramer.

The protein localises to the cytoplasm. The catalysed reaction is L-citrulline + L-aspartate + ATP = 2-(N(omega)-L-arginino)succinate + AMP + diphosphate + H(+). It participates in amino-acid biosynthesis; L-arginine biosynthesis; L-arginine from L-ornithine and carbamoyl phosphate: step 2/3. This is Argininosuccinate synthase from Ruthia magnifica subsp. Calyptogena magnifica.